Reading from the N-terminus, the 686-residue chain is Glycogenin (686 aa).

Positions 13, 16, 19, and 82 each coordinate UDP. 13 residues coordinate UDP-alpha-D-glucose: Leu13, Asn16, Tyr19, Arg82, Lys91, Asp107, Ala108, Asp109, Asn139, Thr140, Asp166, Asp169, and Gln170. UDP contacts are provided by Asp107, Ala108, and Asp109. Asp107 is a binding site for Mn(2+). Position 109 (Asp109) interacts with Mn(2+). 2 O-linked (Glc...) tyrosine glycosylation sites follow: Tyr196 and Tyr198. Positions 213, 216, and 219 each coordinate UDP. Residue His213 coordinates Mn(2+). Residues Gly216 and Lys219 each coordinate UDP-alpha-D-glucose. Disordered regions lie at residues 264–331, 381–444, 460–533, and 603–686; these read VKGE…ANFP, PEPT…RGNA, KHRR…GVPA, and KPLR…VLET. 2 stretches are compositionally biased toward low complexity: residues 285–308 and 398–416; these read SSQS…YTSH and SAAS…ASPT. A not required for catalytic activity region spans residues 307–686; the sequence is SHGASWDASR…TEEERDVLET (380 aa). Composition is skewed to polar residues over residues 424–442 and 471–483; these read VTPT…TTRG and AATS…GRAQ. Residues 677–686 are compositionally biased toward acidic residues; the sequence is TEEERDVLET.

This sequence belongs to the glycosyltransferase 8 family. Glycogenin subfamily. In terms of assembly, interacts with glycogen synthase gsy-1; the interaction is direct. Mn(2+) is required as a cofactor.

The protein resides in the cytoplasm. It localises to the vacuole. The catalysed reaction is L-tyrosyl-[glycogenin] + UDP-alpha-D-glucose = alpha-D-glucosyl-L-tyrosyl-[glycogenin] + UDP + H(+). It carries out the reaction [1,4-alpha-D-glucosyl](n)-L-tyrosyl-[glycogenin] + UDP-alpha-D-glucose = [1,4-alpha-D-glucosyl](n+1)-L-tyrosyl-[glycogenin] + UDP + H(+). Functionally, self-glucosylating initiator of glycogen synthesis. It catalyzes the formation of a short alpha (1,4)-glucosyl chain covalently attached via a glucose 1-O-tyrosyl linkage to internal tyrosine residues and these chains act as primers for the elongation reaction catalyzed by glycogen synthase. The protein is Glycogenin of Neurospora crassa (strain ATCC 24698 / 74-OR23-1A / CBS 708.71 / DSM 1257 / FGSC 987).